The chain runs to 78 residues: MANIKSAIKRAELNVKQNEKNSAQKSAMRTAIKAFEANPSEELFRAASSAIDKAETKGLIHKNKASRDKARLSAKLVK.

This sequence belongs to the bacterial ribosomal protein bS20 family.

Its function is as follows. Binds directly to 16S ribosomal RNA. This is Small ribosomal subunit protein bS20 from Streptococcus pneumoniae serotype 4 (strain ATCC BAA-334 / TIGR4).